The primary structure comprises 475 residues: MSPQTETKTSVGFKAGVRDYRLTYYTPNYKTKDTDILAAFRMTPQPGVPPEEAGAAVAAESSTGTWTTVWTDGLTSLDRYKGRCYEIEAVTGEKNQFIAYVAYPLDLFEEGSVTNLFTSIVGNVFGFKALRALRLEDLRIPPAYSKTFIGPPHGIQVERDKSNKYGRPLLGCTIKPKLGLSAKNYGRAVYECLRGGLDFTKDDENVNSQPFMRWRDRFLFVAEALFKAQAETGEIKGHYLNVTAGTYEELLKRAHCARELGVPIVMHDYLTGGFTANTSLAHYCRDNGLLLHIHRAMHAVIDRQKNHGIHFRVLAKALRMSGGDHIHAGTVVGKLEGERDVTLGFVDLLRDDYIEKDRSRGIYFTQDWVSMPGVLPVASGGIHVWHMPALTEIFGDDSVLQFGGGTLGHPWGNAPGAVANRVALEACVKARNEGRDLAREGNEIIREASQWSPESAAACEVWKEIKFEFEAMDTL.

Residues 1 to 2 (MS) constitute a propeptide that is removed on maturation. The residue at position 3 (proline 3) is an N-acetylproline. Lysine 14 is subject to N6,N6,N6-trimethyllysine. 2 residues coordinate substrate: asparagine 123 and threonine 173. Lysine 175 acts as the Proton acceptor in catalysis. Substrate is bound at residue lysine 177. The Mg(2+) site is built by lysine 201, aspartate 203, and glutamate 204. Lysine 201 is modified (N6-carboxylysine). Residue histidine 294 is the Proton acceptor of the active site. Residues arginine 295, histidine 327, and serine 379 each coordinate substrate.

The protein belongs to the RuBisCO large chain family. Type I subfamily. Heterohexadecamer of 8 large chains and 8 small chains. Mg(2+) serves as cofactor.

The protein localises to the plastid. It is found in the chloroplast. It carries out the reaction 2 (2R)-3-phosphoglycerate + 2 H(+) = D-ribulose 1,5-bisphosphate + CO2 + H2O. The catalysed reaction is D-ribulose 1,5-bisphosphate + O2 = 2-phosphoglycolate + (2R)-3-phosphoglycerate + 2 H(+). Its function is as follows. RuBisCO catalyzes two reactions: the carboxylation of D-ribulose 1,5-bisphosphate, the primary event in carbon dioxide fixation, as well as the oxidative fragmentation of the pentose substrate in the photorespiration process. Both reactions occur simultaneously and in competition at the same active site. The sequence is that of Ribulose bisphosphate carboxylase large chain from Huperzia lucidula (Shining clubmoss).